The sequence spans 63 residues: Parvalbumin alpha (63 aa).

EF-hand domains are found at residues 28 to 38 (IEEEELGLILK) and 39 to 63 (VLLA…LVSE). 7 residues coordinate Ca(2+): E29, E32, D45, D47, D49, K51, and E56.

Detected in muscle and cutaneous mucus. In the skin, detected in cells in the basal region of the glandular epithelium of the dermal mucus glands (at protein level).

The protein localises to the cytoplasm. The protein resides in the secreted. In terms of biological role, in muscle, parvalbumin is thought to be involved in relaxation after contraction. It binds two calcium ions. This Rana temporaria (European common frog) protein is Parvalbumin alpha.